The primary structure comprises 191 residues: Accessory gene regulator protein B (191 aa).

Helical transmembrane passes span 45-65 (IVVY…TVHL), 81-101 (STFA…WILI), 108-128 (IFMI…SPAI), 144-164 (ITAI…KQPF), and 165-185 (NELV…IFFP).

The protein belongs to the AgrB family.

It localises to the cell membrane. Functionally, essential for the production of a quorum sensing system signal molecule, the autoinducing peptide (AIP). This quorum sensing system is responsible for the regulation of the expression of virulence factor genes. Involved in the proteolytic processing of AgrD, the precursor of AIP. The protein is Accessory gene regulator protein B of Staphylococcus carnosus (strain TM300).